A 449-amino-acid chain; its full sequence is Phosphoglucosamine mutase (449 aa).

The active-site Phosphoserine intermediate is the Ser-101. Mg(2+) is bound by residues Ser-101, Asp-241, Asp-243, and Asp-245. Ser-101 carries the phosphoserine modification.

This sequence belongs to the phosphohexose mutase family. It depends on Mg(2+) as a cofactor. In terms of processing, activated by phosphorylation.

The enzyme catalyses alpha-D-glucosamine 1-phosphate = D-glucosamine 6-phosphate. Functionally, catalyzes the conversion of glucosamine-6-phosphate to glucosamine-1-phosphate. This Ruminiclostridium cellulolyticum (strain ATCC 35319 / DSM 5812 / JCM 6584 / H10) (Clostridium cellulolyticum) protein is Phosphoglucosamine mutase.